The sequence spans 556 residues: Arginine--tRNA ligase (556 aa).

Positions 132–142 (ANPTGDLHLGH) match the 'HIGH' region motif.

Belongs to the class-I aminoacyl-tRNA synthetase family. Monomer.

The protein localises to the cytoplasm. It catalyses the reaction tRNA(Arg) + L-arginine + ATP = L-arginyl-tRNA(Arg) + AMP + diphosphate. The chain is Arginine--tRNA ligase from Bacillus cereus (strain ATCC 14579 / DSM 31 / CCUG 7414 / JCM 2152 / NBRC 15305 / NCIMB 9373 / NCTC 2599 / NRRL B-3711).